The following is a 202-amino-acid chain: Large ribosomal subunit protein uL4 (202 aa).

A compositionally biased stretch (polar residues) spans 42-52 (GTKAQKSRSQV). Residues 42 to 70 (GTKAQKSRSQVSGTTKKSKKQKGGGARHG) form a disordered region.

It belongs to the universal ribosomal protein uL4 family. As to quaternary structure, part of the 50S ribosomal subunit.

One of the primary rRNA binding proteins, this protein initially binds near the 5'-end of the 23S rRNA. It is important during the early stages of 50S assembly. It makes multiple contacts with different domains of the 23S rRNA in the assembled 50S subunit and ribosome. Its function is as follows. Forms part of the polypeptide exit tunnel. This Xylella fastidiosa (strain 9a5c) protein is Large ribosomal subunit protein uL4.